Consider the following 90-residue polypeptide: Cell division protein CrgA (90 aa).

A disordered region spans residues 1 to 26 (MPKAKVTKNSIAPVSSNPSANRTPVK). A compositionally biased stretch (polar residues) spans 7–26 (TKNSIAPVSSNPSANRTPVK). The next 2 membrane-spanning stretches (helical) occupy residues 38–58 (VIMFAFMLVGLLWLVANYLVG) and 69–89 (AWNYGIGFGLLIIGLLMTMGW).

The protein belongs to the CrgA family.

Its subcellular location is the cell membrane. In terms of biological role, involved in cell division. In Corynebacterium efficiens (strain DSM 44549 / YS-314 / AJ 12310 / JCM 11189 / NBRC 100395), this protein is Cell division protein CrgA.